A 302-amino-acid chain; its full sequence is Glycine--tRNA ligase alpha subunit (302 aa).

The protein belongs to the class-II aminoacyl-tRNA synthetase family. Tetramer of two alpha and two beta subunits.

It localises to the cytoplasm. The enzyme catalyses tRNA(Gly) + glycine + ATP = glycyl-tRNA(Gly) + AMP + diphosphate. The polypeptide is Glycine--tRNA ligase alpha subunit (Enterococcus faecalis (strain ATCC 700802 / V583)).